The primary structure comprises 367 residues: 3-dehydroquinate synthase (367 aa).

Residues 111-115 (GVVGD), 135-136 (TS), K148, K157, and 175-178 (TLDT) contribute to the NAD(+) site. Zn(2+) contacts are provided by E190, H254, and H271.

Belongs to the sugar phosphate cyclases superfamily. Dehydroquinate synthase family. The cofactor is Co(2+). Zn(2+) is required as a cofactor. NAD(+) serves as cofactor.

It is found in the cytoplasm. The catalysed reaction is 7-phospho-2-dehydro-3-deoxy-D-arabino-heptonate = 3-dehydroquinate + phosphate. Its pathway is metabolic intermediate biosynthesis; chorismate biosynthesis; chorismate from D-erythrose 4-phosphate and phosphoenolpyruvate: step 2/7. Its function is as follows. Catalyzes the conversion of 3-deoxy-D-arabino-heptulosonate 7-phosphate (DAHP) to dehydroquinate (DHQ). In Salinibacter ruber (strain DSM 13855 / M31), this protein is 3-dehydroquinate synthase.